A 223-amino-acid chain; its full sequence is MCPSARSLLLLASLVLLEHLGSARNLPRSTPVPAVSQECHNLSQTLLSTVDSALQNAIEILEYYPCSAEEVNHEDITKNRTNTVKACLPQELAQNENCLASRETSFIIKRSSLTSGRTSWNTTLCFSSIYEDLKMYQLELKAISEKLLMDPKGQIYEDKALLAAVDYLMQAVNVNNETVPQTPSPEAPSSNLYRTKTKLCILLHALRIRAVTINRVMSYLNSS.

A signal peptide spans 1 to 23 (MCPSARSLLLLASLVLLEHLGSA). N-linked (GlcNAc...) asparagine glycans are attached at residues Asn41, Asn79, Asn121, and Asn176. 2 cysteine pairs are disulfide-bonded: Cys66–Cys200 and Cys87–Cys125.

Belongs to the IL-6 superfamily. In terms of assembly, heterodimer with IL12B; disulfide-linked. This heterodimer is known as interleukin IL-12. Heterodimer with EBI3/IL27B; not disulfide-linked. This heterodimer is known as interleukin IL-35. Interacts with NBR1; this interaction promotes IL-12 secretion.

The protein localises to the secreted. In terms of biological role, heterodimerizes with IL12B to form the IL-12 cytokine or with EBI3/IL27B to form the IL-35 cytokine. IL-12 is primarily produced by professional antigen-presenting cells (APCs) such as B-cells and dendritic cells (DCs) as well as macrophages and granulocytes and regulates T-cell and natural killer-cell responses, induces the production of interferon-gamma (IFN-gamma), favors the differentiation of T-helper 1 (Th1) cells and is an important link between innate resistance and adaptive immunity. Mechanistically, exerts its biological effects through a receptor composed of IL12R1 and IL12R2 subunits. Binding to the receptor results in the rapid tyrosine phosphorylation of a number of cellular substrates including the JAK family kinases TYK2 and JAK2. In turn, recruited STAT4 gets phosphorylated and translocates to the nucleus where it regulates cytokine/growth factor responsive genes. As part of IL-35, plays essential roles in maintaining the immune homeostasis of the liver microenvironment and also functions as an immune-suppressive cytokine. Mediates biological events through unconventional receptors composed of IL12RB2 and gp130/IL6ST heterodimers or homodimers. Signaling requires the transcription factors STAT1 and STAT4, which form a unique heterodimer that binds to distinct DNA sites. The chain is Interleukin-12 subunit alpha (IL12A) from Marmota monax (Woodchuck).